The chain runs to 388 residues: Probable proton-coupled zinc antiporter SLC30A3 (388 aa).

Residues 1 to 41 (MEPSLATGGSETTRLVSARDRSSAGGGLRLKSLFTEPSEPL) are disordered. Topologically, residues 1–75 (MEPSLATGGS…SPERVQARRQ (75 aa)) are cytoplasmic. 2 positions are modified to phosphoserine: Ser63 and Ser66. The chain crosses the membrane as a helical span at residues 76-96 (LYAACAVCFIFMAGEVVGGYL). Residues 97–105 (AHSLAIMTD) are Lumenal-facing. A helical membrane pass occupies residues 106-126 (AAHLLADIGSMLASLFSLWLS). The Zn(2+) site is built by His108 and Asp112. The Cytoplasmic segment spans residues 127–145 (TRPATRTMTFGWHRSETLG). A helical transmembrane segment spans residues 146 to 166 (ALASVVSLWIVTGILLYLAFL). Over 167–177 (RLLHSDYHIEA) the chain is Lumenal. A helical membrane pass occupies residues 178 to 198 (GAMLLTASIAVCANLLMAFVL). Residues 199–235 (HQTGAPHSHGSTGAEYAPLEEGHGYPMSLGNTSVRAA) are Cytoplasmic-facing. A helical transmembrane segment spans residues 236–256 (FVHVLGDLLQSFGVLAASILI). 2 residues coordinate Zn(2+): His238 and Asp242. The Lumenal segment spans residues 257 to 263 (YFKPQYK). Residues 264–284 (VADPISTFLFSICALGSTAPT) traverse the membrane as a helical segment. Over 285-388 (LRDVLLVLME…CLRCQEPSQA (104 aa)) the chain is Cytoplasmic.

The protein belongs to the cation diffusion facilitator (CDF) transporter (TC 2.A.4) family. SLC30A subfamily. As to quaternary structure, homodimer. Homodimerization is negligible compared to the human protein. It could explain the lower efficiency of zinc transport. Interacts with TMEM163. Expression is restricted to brain (at protein level). In the brain, most abundant in hippocampus and cerebral cortex. The mRNA is also detected in testis, expression being restricted to germ cells and highest in pachytene spermatocytes and round spermatids.

It is found in the cytoplasmic vesicle. It localises to the secretory vesicle. Its subcellular location is the synaptic vesicle membrane. The protein resides in the synapse. The protein localises to the synaptosome. It is found in the late endosome membrane. It localises to the lysosome membrane. It catalyses the reaction Zn(2+)(in) + 2 H(+)(out) = Zn(2+)(out) + 2 H(+)(in). Functionally, probable proton-coupled zinc ion antiporter mediating the import of zinc from cytoplasm into synaptic vesicles and participating to cellular zinc ion homeostasis in the brain. The polypeptide is Probable proton-coupled zinc antiporter SLC30A3 (Mus musculus (Mouse)).